The primary structure comprises 344 residues: Protein L-Myc-1-B (344 aa).

2 stretches are compositionally biased toward polar residues: residues 104–113 and 213–223; these read GSPRVTNTQK and NTMSPQHNFHS. 2 disordered regions span residues 104–162 and 208–271; these read GSPR…EDEI and LPPE…YLER. A compositionally biased stretch (basic and acidic residues) spans 259-270; it reads DLAKRKNHNYLE. A bHLH domain is found at 261–313; sequence AKRKNHNYLERKRRNDLRSRFLALREEVPSLSRSTKTPKVVVLSKATEFLKGL. The tract at residues 313–341 is leucine-zipper; that stretch reads LVIQEQQLTAEKLKLWSRHQQLLRRISQL.

In terms of assembly, efficient DNA binding requires dimerization with another bHLH protein. Binds DNA as a heterodimer with MAX. In terms of tissue distribution, high levels in oocytes, modest levels in kidney and low levels in spleen.

It localises to the nucleus. The sequence is that of Protein L-Myc-1-B (mycl1-b) from Xenopus laevis (African clawed frog).